The primary structure comprises 230 residues: Large ribosomal subunit protein uL1 (230 aa).

This sequence belongs to the universal ribosomal protein uL1 family. Part of the 50S ribosomal subunit.

Its function is as follows. Binds directly to 23S rRNA. The L1 stalk is quite mobile in the ribosome, and is involved in E site tRNA release. Protein L1 is also a translational repressor protein, it controls the translation of the L11 operon by binding to its mRNA. The protein is Large ribosomal subunit protein uL1 of Limosilactobacillus reuteri subsp. reuteri (strain JCM 1112) (Lactobacillus reuteri).